The following is a 100-amino-acid chain: Urease subunit gamma (100 aa).

It belongs to the urease gamma subunit family. In terms of assembly, heterotrimer of UreA (gamma), UreB (beta) and UreC (alpha) subunits. Three heterotrimers associate to form the active enzyme.

Its subcellular location is the cytoplasm. It catalyses the reaction urea + 2 H2O + H(+) = hydrogencarbonate + 2 NH4(+). The protein operates within nitrogen metabolism; urea degradation; CO(2) and NH(3) from urea (urease route): step 1/1. The protein is Urease subunit gamma of Dinoroseobacter shibae (strain DSM 16493 / NCIMB 14021 / DFL 12).